The chain runs to 592 residues: uncharacterized protein (592 aa).

A signal peptide spans 1–23 (MRKAPLLRFTLASLALACSQAFA). S37 functions as the Nucleophile in the catalytic mechanism. Residues D294 and H297 contribute to the active site. An Autotransporter domain is found at 334–592 (HQDELRNQWQ…PDPGEPGGKP (259 aa)). The interval 572–592 (FTLTGYTPHTAPDPGEPGGKP) is disordered.

It belongs to the 'GDSL' lipolytic enzyme family.

This is an uncharacterized protein from Pseudomonas putida (Arthrobacter siderocapsulatus).